The sequence spans 320 residues: NAD-dependent protein deacylase SIR2rp2 (320 aa).

Residues 1 to 22 (MRPAGTLASFLERCSARKRGRG) constitute a mitochondrion transit peptide. The 298-residue stretch at 23-320 (CVVLTGAGCS…MFFRRKTIQL (298 aa)) folds into the Deacetylase sirtuin-type domain. Residues 28–48 (GAGCSTESGIPDYRGPNGQYH) and 108–111 (QNVD) contribute to the NAD(+) site. His144 acts as the Proton acceptor in catalysis. Cys152, Cys155, Cys207, and Cys210 together coordinate Zn(2+). NAD(+) is bound by residues 248–250 (GTS), 274–276 (NAG), and Gly294.

Belongs to the sirtuin family. Class II subfamily. Zn(2+) is required as a cofactor.

It localises to the mitochondrion matrix. It catalyses the reaction N(6)-acetyl-L-lysyl-[protein] + NAD(+) + H2O = 2''-O-acetyl-ADP-D-ribose + nicotinamide + L-lysyl-[protein]. Its function is as follows. NAD-dependent protein deacylase. Catalyzes the NAD-dependent hydrolysis of acyl groups from lysine residues. The sequence is that of NAD-dependent protein deacylase SIR2rp2 (SIR2rp2) from Leishmania major.